We begin with the raw amino-acid sequence, 301 residues long: GTPase Era (301 aa).

The Era-type G domain occupies tyrosine 7–glutamate 175. Residues glycine 15–serine 22 form a G1 region. GTP is bound at residue glycine 15–serine 22. Residues glutamine 41 to histidine 45 form a G2 region. Residues aspartate 62 to glycine 65 form a G3 region. GTP contacts are provided by residues aspartate 62–leucine 66 and asparagine 124–aspartate 127. The G4 stretch occupies residues asparagine 124–aspartate 127. The tract at residues isoleucine 154–alanine 156 is G5. The region spanning leucine 206–serine 283 is the KH type-2 domain.

The protein belongs to the TRAFAC class TrmE-Era-EngA-EngB-Septin-like GTPase superfamily. Era GTPase family. In terms of assembly, monomer.

The protein resides in the cytoplasm. It localises to the cell inner membrane. Functionally, an essential GTPase that binds both GDP and GTP, with rapid nucleotide exchange. Plays a role in 16S rRNA processing and 30S ribosomal subunit biogenesis and possibly also in cell cycle regulation and energy metabolism. The chain is GTPase Era from Salmonella agona (strain SL483).